The sequence spans 86 residues: Small ribosomal subunit protein uS17 (86 aa).

This sequence belongs to the universal ribosomal protein uS17 family. In terms of assembly, part of the 30S ribosomal subunit.

One of the primary rRNA binding proteins, it binds specifically to the 5'-end of 16S ribosomal RNA. This Halorhodospira halophila (strain DSM 244 / SL1) (Ectothiorhodospira halophila (strain DSM 244 / SL1)) protein is Small ribosomal subunit protein uS17.